Reading from the N-terminus, the 487-residue chain is Protein FAM221B (487 aa).

Polar residues-rich tracts occupy residues 1-13 and 36-48; these read MEANKTTEGPQDT and HETPLQPSSSQKH. Disordered stretches follow at residues 1–103 and 132–289; these read MEAN…QSVT and QLSP…VTSR. Over residues 81–103 the composition is skewed to low complexity; that stretch reads PPVKSSSSGLLSLPPQLSPQSVT. 2 stretches are compositionally biased toward basic and acidic residues: residues 227 to 236 and 243 to 253; these read ESEHFPKHSF and AKEDESTKEGE. Serine 248 bears the Phosphoserine mark.

The protein belongs to the FAM221 family.

This is Protein FAM221B (Fam221b) from Mus musculus (Mouse).